Consider the following 418-residue polypeptide: EPS I polysaccharide export inner membrane protein EpsF (418 aa).

10 helical membrane-spanning segments follow: residues 21–41 (VLVVIGMLLVVPMAFPLLPII), 45–65 (CAAIFVILLPLGRLQHVLATA), 142–162 (PLLVWAVLIFISLMLAWIAIY), 170–190 (YVVFVSYLSTITLYALQGSAI), 222–242 (AGTHSSAAVVLLACAVVVLFL), 262–282 (LIVLLALAAAGAVFGSAEFVM), 296–316 (SAWELQLAVEAVLACLFAWLL), 326–346 (MAFLLFVVVCFSTSLFAPAVG), 347–367 (ARLFRYTYCFYIVYLCAFFFA), and 377–397 (KTLASLLLLASFGWAIFIVSA).

It to S.marcescens SfuB.

It localises to the cell inner membrane. In terms of biological role, probably involved in polymerization and/or export of exopolysaccharide EPS I which functions as a virulence factor. May play a role in export of EPS I or its intermediates across the membranes. The chain is EPS I polysaccharide export inner membrane protein EpsF (epsF) from Ralstonia nicotianae (strain ATCC BAA-1114 / GMI1000) (Ralstonia solanacearum).